The primary structure comprises 548 residues: DNA ligase (548 aa).

An ATP-binding site is contributed by E252. The active-site N6-AMP-lysine intermediate is K254. The ATP site is built by R259, R274, E303, F343, R414, and K420.

This sequence belongs to the ATP-dependent DNA ligase family. The cofactor is Mg(2+).

The enzyme catalyses ATP + (deoxyribonucleotide)n-3'-hydroxyl + 5'-phospho-(deoxyribonucleotide)m = (deoxyribonucleotide)n+m + AMP + diphosphate.. Functionally, DNA ligase that seals nicks in double-stranded DNA during DNA replication, DNA recombination and DNA repair. The protein is DNA ligase of Natronomonas pharaonis (strain ATCC 35678 / DSM 2160 / CIP 103997 / JCM 8858 / NBRC 14720 / NCIMB 2260 / Gabara) (Halobacterium pharaonis).